The following is a 249-amino-acid chain: MIT domain-containing protein 1 (249 aa).

An MIT domain is found at 8–86 (QDPQSTAAAT…KYLDQEKEDG (79 aa)). Residues 168–231 (RGLQEIEESL…SLGYCDFDLR (64 aa)) are important for association with membranes.

Homodimer. Interacts (via MIT domain) with CHMP1A, CHMP1B, CHMP2A and IST1.

It is found in the late endosome membrane. Its subcellular location is the midbody. The protein localises to the membrane. In terms of biological role, required for efficient abscission at the end of cytokinesis, together with components of the ESCRT-III complex. This Homo sapiens (Human) protein is MIT domain-containing protein 1 (MITD1).